The chain runs to 364 residues: Acidic fibroblast growth factor intracellular-binding protein (364 aa).

An N-acetylthreonine modification is found at Thr-2.

In terms of assembly, binds to internalized FGF1; this interaction is increased in the presence of CSNKB, suggesting a possible cooperative interaction between CSNKB and FIBP in binding to FGF1. In terms of tissue distribution, highly expressed in heart, skeletal muscle and pancreas. Expressed at lower levels in brain. Also found in placenta, liver and kidney.

It is found in the nucleus. Its subcellular location is the endomembrane system. May be involved in mitogenic function of FGF1. May mediate with IER2 FGF-signaling in the establishment of laterality in the embryo. This chain is Acidic fibroblast growth factor intracellular-binding protein (FIBP), found in Homo sapiens (Human).